The sequence spans 953 residues: ATP-dependent 6-phosphofructokinase (953 aa).

The interval 1-558 (MIEGISFASF…QLQGFLLTNS (558 aa)) is N-terminal catalytic PFK domain 1. ATP-binding positions include glycine 193, 256–257 (RC), and 286–289 (GDGS). Residue aspartate 287 coordinates Mg(2+). Residues 332-334 (SID), arginine 369, 376-378 (MGR), glutamate 433, arginine 460, and 466-469 (HVQR) each bind substrate. Catalysis depends on aspartate 334, which acts as the Proton acceptor. An interdomain linker region spans residues 559–572 (ADKDRPQEPAKDPL). The segment at 573–953 (RVAIVCTGAP…AKEQGIIDPC (381 aa)) is C-terminal regulatory PFK domain 2. Beta-D-fructose 2,6-bisphosphate is bound by residues arginine 645, 702 to 706 (TISNN), arginine 740, 747 to 749 (QGG), glutamate 807, arginine 833, 839 to 842 (HVQQ), and arginine 906.

Belongs to the phosphofructokinase type A (PFKA) family. ATP-dependent PFK group I subfamily. Eukaryotic two domain clade 'E' sub-subfamily. Heterooctamer of 4 alpha and 4 beta chains. Mg(2+) is required as a cofactor.

Its subcellular location is the cytoplasm. It carries out the reaction beta-D-fructose 6-phosphate + ATP = beta-D-fructose 1,6-bisphosphate + ADP + H(+). It functions in the pathway carbohydrate degradation; glycolysis; D-glyceraldehyde 3-phosphate and glycerone phosphate from D-glucose: step 3/4. Its activity is regulated as follows. Allosterically activated by ADP, AMP, or fructose 2,6-bisphosphate, and allosterically inhibited by ATP or citrate. Functionally, catalyzes the phosphorylation of D-fructose 6-phosphate to fructose 1,6-bisphosphate by ATP, the first committing step of glycolysis. The chain is ATP-dependent 6-phosphofructokinase (PFK1) from Yarrowia lipolytica (strain CLIB 122 / E 150) (Yeast).